The primary structure comprises 705 residues: Ribonuclease R (705 aa).

The RNB domain maps to 240 to 567 (RRDLREQLCF…VHRLLKKALR (328 aa)). An S1 motif domain is found at 615–696 (GEEFIGIITG…ERARVEFELI (82 aa)).

It belongs to the RNR ribonuclease family. RNase R subfamily.

The protein localises to the cytoplasm. It carries out the reaction Exonucleolytic cleavage in the 3'- to 5'-direction to yield nucleoside 5'-phosphates.. Functionally, 3'-5' exoribonuclease that releases 5'-nucleoside monophosphates and is involved in maturation of structured RNAs. This is Ribonuclease R from Aquifex aeolicus (strain VF5).